Reading from the N-terminus, the 290-residue chain is Fructose-1,6-bisphosphatase class 1 (290 aa).

Positions 78, 96, 98, and 99 each coordinate Mg(2+). Substrate is bound by residues 99–102 (DGSS), Tyr201, and Lys226. Glu232 contributes to the Mg(2+) binding site.

Belongs to the FBPase class 1 family. As to quaternary structure, homotetramer. Mg(2+) serves as cofactor.

It is found in the cytoplasm. The catalysed reaction is beta-D-fructose 1,6-bisphosphate + H2O = beta-D-fructose 6-phosphate + phosphate. It functions in the pathway carbohydrate biosynthesis; gluconeogenesis. This chain is Fructose-1,6-bisphosphatase class 1, found in Helicobacter pylori (strain J99 / ATCC 700824) (Campylobacter pylori J99).